A 435-amino-acid chain; its full sequence is UDP-N-acetylmuramate--L-alanine ligase (435 aa).

108 to 114 (GSHGKTS) is a binding site for ATP.

The protein belongs to the MurCDEF family.

The protein resides in the cytoplasm. It catalyses the reaction UDP-N-acetyl-alpha-D-muramate + L-alanine + ATP = UDP-N-acetyl-alpha-D-muramoyl-L-alanine + ADP + phosphate + H(+). Its pathway is cell wall biogenesis; peptidoglycan biosynthesis. In terms of biological role, cell wall formation. The sequence is that of UDP-N-acetylmuramate--L-alanine ligase from Shouchella clausii (strain KSM-K16) (Alkalihalobacillus clausii).